Reading from the N-terminus, the 152-residue chain is 6,7-dimethyl-8-ribityllumazine synthase (152 aa).

5-amino-6-(D-ribitylamino)uracil-binding positions include F21, 55 to 57 (AFE), and 79 to 81 (AVI). 84 to 85 (AT) is a (2S)-2-hydroxy-3-oxobutyl phosphate binding site. The active-site Proton donor is H87. F112 is a binding site for 5-amino-6-(D-ribitylamino)uracil. (2S)-2-hydroxy-3-oxobutyl phosphate is bound at residue R126.

The protein belongs to the DMRL synthase family. In terms of assembly, forms an icosahedral capsid composed of 60 subunits, arranged as a dodecamer of pentamers.

It carries out the reaction (2S)-2-hydroxy-3-oxobutyl phosphate + 5-amino-6-(D-ribitylamino)uracil = 6,7-dimethyl-8-(1-D-ribityl)lumazine + phosphate + 2 H2O + H(+). It functions in the pathway cofactor biosynthesis; riboflavin biosynthesis; riboflavin from 2-hydroxy-3-oxobutyl phosphate and 5-amino-6-(D-ribitylamino)uracil: step 1/2. Its function is as follows. Catalyzes the formation of 6,7-dimethyl-8-ribityllumazine by condensation of 5-amino-6-(D-ribitylamino)uracil with 3,4-dihydroxy-2-butanone 4-phosphate. This is the penultimate step in the biosynthesis of riboflavin. This chain is 6,7-dimethyl-8-ribityllumazine synthase, found in Exiguobacterium sibiricum (strain DSM 17290 / CCUG 55495 / CIP 109462 / JCM 13490 / 255-15).